A 286-amino-acid polypeptide reads, in one-letter code: 33 kDa chaperonin (286 aa).

2 cysteine pairs are disulfide-bonded: cysteine 233–cysteine 235 and cysteine 267–cysteine 270.

The protein belongs to the HSP33 family. Under oxidizing conditions two disulfide bonds are formed involving the reactive cysteines. Under reducing conditions zinc is bound to the reactive cysteines and the protein is inactive.

Its subcellular location is the cytoplasm. Redox regulated molecular chaperone. Protects both thermally unfolding and oxidatively damaged proteins from irreversible aggregation. Plays an important role in the bacterial defense system toward oxidative stress. This is 33 kDa chaperonin from Histophilus somni (strain 2336) (Haemophilus somnus).